Here is a 970-residue protein sequence, read N- to C-terminus: MASTKAPGPGEKHHSIDAQLRQLVPGKVSEDDKLIEYDALLVDRFLNILQDLHGPSLREFVQECYEVSADYEGKGDTTKLGELGAKLTGLAPADAILVASSILHMLNLANLAEEVQIAHRRRNSKLKKGGFADEGSATTESDIEETLKRLVSEVGKSPEEVFEALKNQTVDLVFTAHPTQSARRSLLQKNARIRNCLTQLNAKDITDDDKQELDEALQREIQAAFRTDEIRRAQPTPQAEMRYGMSYIHETVWKGVPKFLRRVDTALKNIGINERLPYNVSLIRFSSWMGGDRDGNPRVTPEVTRDVCLLARMMAANLYIDQIEELMFELSMWRCNDELRVRAEELHSSSGSKVTKYYIEFWKQIPPNEPYRVILGHVRDKLYNTRERARHLLASGVSEISAESSFTSIEEFLEPLELCYKSLCDCGDKAIADGSLLDLLRQVFTFGLSLVKLDIRQESERHTDVIDAITTHLGIGSYREWPEDKRQEWLLSELRGKRPLLPPDLPQTDEIADVIGAFHVLAELPPDSFGPYIISMATAPSDVLAVELLQRECGVRQPLPVVPLFERLADLQSAPASVERLFSVDWYMDRIKGKQQVMVGYSDSGKDAGRLSAAWQLYRAQEEMAQVAKRYGVKLTLFHGRGGTVGRGGGPTHLAILSQPPDTINGSIRVTVQGEVIEFCFGEEHLCFQTLQRFTAATLEHGMHPPVSPKPEWRKLMDEMAVVATEEYRSVVVKEARFVEYFRSATPETEYGRMNIGSRPAKRRPGGGITTLRAIPWIFSWTQTRFHLPVWLGVGAAFKFAIDKDVRNFQVLKEMYNEWPFFRVTLDLLEMVFAKGDPGIAGLYDELLVAEELKPFGKQLRDKYVETQQLLLQIAGHKDILEGDPFLKQGLVLRNPYITTLNVFQAYTLKRIRDPNFKVTPQPPLSKEFADENKPAGLVKLNPASEYPPGLEDTLILTMKGIAAGMQNTG.

Serine 15 is modified (phosphoserine). Active-site residues include histidine 177, lysine 606, and arginine 647.

This sequence belongs to the PEPCase type 1 family. In terms of assembly, homotetramer. It depends on Mg(2+) as a cofactor.

The protein resides in the cytoplasm. The enzyme catalyses oxaloacetate + phosphate = phosphoenolpyruvate + hydrogencarbonate. Its pathway is photosynthesis; C4 acid pathway. By light-reversible phosphorylation. In terms of biological role, through the carboxylation of phosphoenolpyruvate (PEP) it forms oxaloacetate, a four-carbon dicarboxylic acid source for the tricarboxylic acid cycle. The sequence is that of Phosphoenolpyruvate carboxylase 1 (PEP1) from Zea mays (Maize).